The primary structure comprises 316 residues: Phosphate acetyltransferase (316 aa).

Belongs to the phosphate acetyltransferase and butyryltransferase family.

The protein localises to the cytoplasm. It carries out the reaction acetyl-CoA + phosphate = acetyl phosphate + CoA. It participates in metabolic intermediate biosynthesis; acetyl-CoA biosynthesis; acetyl-CoA from acetate: step 2/2. The protein is Phosphate acetyltransferase (pta) of Rhizobium meliloti (Ensifer meliloti).